Consider the following 544-residue polypeptide: Chaperonin GroEL (544 aa).

Residues 30–33 (TLGP), Lys51, 87–91 (DGTTT), Gly415, and Asp495 contribute to the ATP site.

The protein belongs to the chaperonin (HSP60) family. In terms of assembly, forms a cylinder of 14 subunits composed of two heptameric rings stacked back-to-back. Interacts with the co-chaperonin GroES.

It is found in the cytoplasm. The catalysed reaction is ATP + H2O + a folded polypeptide = ADP + phosphate + an unfolded polypeptide.. Functionally, together with its co-chaperonin GroES, plays an essential role in assisting protein folding. The GroEL-GroES system forms a nano-cage that allows encapsulation of the non-native substrate proteins and provides a physical environment optimized to promote and accelerate protein folding. This is Chaperonin GroEL from Neisseria gonorrhoeae (strain ATCC 700825 / FA 1090).